A 487-amino-acid chain; its full sequence is Citrate/succinate antiporter (487 aa).

A run of 14 helical transmembrane segments spans residues 11-31 (LLAP…DGMP), 60-80 (FIAV…AKEL), 95-115 (GLAG…IFAL), 138-158 (TLTL…FTPS), 190-210 (IGGY…SMFV), 214-234 (APNV…ISWL), 237-257 (FLCF…LSYV), 288-308 (WTLI…SEVI), 309-329 (NATA…VVPW), 345-365 (LATL…DWFA), 379-399 (ATVI…ASLS), 401-421 (HTAT…GVPM), 424-444 (LCIL…YATG), and 463-483 (LGAI…WPIL).

Belongs to the SLC13A/DASS transporter (TC 2.A.47) family. DIT1 subfamily.

The protein localises to the cell inner membrane. Functionally, responsible for the uptake of citrate in exchange to the efflux of succinate. Has a relatively broad specificity for C(4)-dicarboxylates and tricarboxylates. The sequence is that of Citrate/succinate antiporter (citT) from Escherichia coli O157:H7.